We begin with the raw amino-acid sequence, 160 residues long: Troponin C, skeletal muscle (160 aa).

4 EF-hand domains span residues 15-50, 51-86, 91-126, and 127-160; these read EMIAEFKAAFDMFDTDGGGDISTKELGTVMRMLGQN, PTREELDAIIEEVDEDGSGTIDFEEFLVMMVRQLKE, KSEEELAEFFRVFDKNGDGFIDREEFGEILRSSGEP, and VSEEEIDELMADGDKNNDGKIDFDEWLKMMENIQ. Ca(2+)-binding residues include Asp28, Asp30, Asp34, Glu39, Asp64, Asp66, Ser68, Thr70, Glu75, Asp104, Asn106, Asp108, Glu115, Asp140, Asn142, Asp144, Lys146, and Glu151.

The protein belongs to the troponin C family.

In terms of biological role, troponin is the central regulatory protein of striated muscle contraction. Tn consists of three components: Tn-I which is the inhibitor of actomyosin ATPase, Tn-T which contains the binding EF-hand for tropomyosin and Tn-C. The binding of calcium to Tn-C abolishes the inhibitory action of Tn on actin filaments. The chain is Troponin C, skeletal muscle from Anguilla anguilla (European freshwater eel).